Reading from the N-terminus, the 278-residue chain is Bis(5'-nucleosyl)-tetraphosphatase, symmetrical (278 aa).

It belongs to the Ap4A hydrolase family.

The catalysed reaction is P(1),P(4)-bis(5'-adenosyl) tetraphosphate + H2O = 2 ADP + 2 H(+). Its function is as follows. Hydrolyzes diadenosine 5',5'''-P1,P4-tetraphosphate to yield ADP. This chain is Bis(5'-nucleosyl)-tetraphosphatase, symmetrical, found in Methylococcus capsulatus (strain ATCC 33009 / NCIMB 11132 / Bath).